Reading from the N-terminus, the 222-residue chain is Leucyl/phenylalanyl-tRNA--protein transferase (222 aa).

This sequence belongs to the L/F-transferase family.

Its subcellular location is the cytoplasm. The catalysed reaction is N-terminal L-lysyl-[protein] + L-leucyl-tRNA(Leu) = N-terminal L-leucyl-L-lysyl-[protein] + tRNA(Leu) + H(+). The enzyme catalyses N-terminal L-arginyl-[protein] + L-leucyl-tRNA(Leu) = N-terminal L-leucyl-L-arginyl-[protein] + tRNA(Leu) + H(+). It carries out the reaction L-phenylalanyl-tRNA(Phe) + an N-terminal L-alpha-aminoacyl-[protein] = an N-terminal L-phenylalanyl-L-alpha-aminoacyl-[protein] + tRNA(Phe). Functions in the N-end rule pathway of protein degradation where it conjugates Leu, Phe and, less efficiently, Met from aminoacyl-tRNAs to the N-termini of proteins containing an N-terminal arginine or lysine. The polypeptide is Leucyl/phenylalanyl-tRNA--protein transferase (Legionella pneumophila (strain Paris)).